A 156-amino-acid polypeptide reads, in one-letter code: MKLLVLCVFAMMATLAVSRRYQFVQHQYIRKAFEVALKVEIIAGFDRTLVKWLRNHGRGLNENQRKVLYFVNRRYMQTHWQNYMLWIVKKTNALGRPPVVADYRALGAEIGRRIDMGYFYNFLKNRVMIPKYLPYMRRLNNMRPEDVPVANRNPGK.

Residues 1–18 (MKLLVLCVFAMMATLAVS) form the signal peptide.

As to quaternary structure, monomer. Homodimer. Molecules associate into dimers and then rapidly dissociate again. Interacts (as a monomer) with the egg vitelline layer protein VERL (via VERL repeats); each VERL chain can bind multiple copies of lysin. As to expression, sperm.

The protein localises to the cytoplasmic vesicle. The protein resides in the secretory vesicle. Its subcellular location is the acrosome lumen. Functionally, creates a 3 um hole in the egg vitelline layer through which the sperm passes. Does not have enzyme activity. Species-specific interaction between the sperm protein lysin and the egg protein VERL exposes a basic surface on lysin that may dissociate the egg vitelline layer via electrostatic repulsion. Plays a role in ensuring species-specific fertilization. The sequence is that of Egg-lysin from Haliotis cracherodii (Black abalone).